Reading from the N-terminus, the 89-residue chain is Histone H3.v2 (89 aa).

It belongs to the histone H3 family.

This chain is Histone H3.v2 (H3v2), found in Dictyostelium discoideum (Social amoeba).